The following is a 685-amino-acid chain: MESTTAFSAVTSALGIQDVHIMAPYLWMLVLGFVIAFVLAFSVGANDVANSFGTAVGSGVVTLRQACILASIFETVGSVLLGAKVSETIRKGLIDVTMYNSTQELLMAGSISAMFGSAVWQLAASFLKLPISGTHCIVGATIGFSLVAKGQQGVKWIELLRIVLSWFISPLLSGIMSALLFFFVKKFILCKADPVPNGLRALPVFYACTIGINLFSIMYTGAPLLGFDKVPLWGIILISVGCAVFCALFVWFFVCPRMKRKIECEFKSSPSESPLMNKKNRELHCPILKPDPDNIKLPVDGGIVAEVKVPILDMVTVSRTEERTVTFNMGDCDDPIEKEKLNSMETNIDQPMNGSVQLANGNHVQFSQTVSNEMNSSGQYQYHTVHKDSGLYKDLLHKLHLAKVGDCMGDSGDKPLRRNNSYTSYTMAICGMPLDSFRNWDAEARPDEAEKLTVHGADGKKRIRMDSYTSYCNAVADAHMDVEAEEQEEGCIEDVVTDRKSSSSSLEERHDQDKPEVSLLFQFLQILTACFGSFAHGGNDVSNAIGPLVALYLVYESGDVATKAATPIWLLLYGGIGICIGLWVWGRRVIQTMGKDLTPITPSSGFSIELASALTVVIASNVGLPISTTHCKVGSVVSVGWLRSKKAVDWRLFRNIFLAWFVTVPISGLISAGIMALFKYAILKV.

6 consecutive transmembrane segments (helical) span residues 21–41, 66–86, 106–126, 162–182, 207–227, and 234–254; these read IMAPYLWMLVLGFVIAFVLAF, ACILASIFETVGSVLLGAKVS, LMAGSISAMFGSAVWQLAASF, IVLSWFISPLLSGIMSALLFF, ACTIGINLFSIMYTGAPLLGF, and GIILISVGCAVFCALFVWFFV. The disordered stretch occupies residues 489-511; that stretch reads EGCIEDVVTDRKSSSSSLEERHD. Positions 496–511 are enriched in basic and acidic residues; the sequence is VTDRKSSSSSLEERHD. Helical transmembrane passes span 517-537, 565-585, 606-626, and 656-676; these read VSLLFQFLQILTACFGSFAHG, ATPIWLLLYGGIGICIGLWVW, FSIELASALTVVIASNVGLPI, and IFLAWFVTVPISGLISAGIMA.

Belongs to the inorganic phosphate transporter (PiT) (TC 2.A.20) family.

The protein localises to the membrane. In terms of biological role, sodium-phosphate symporter which plays a fundamental housekeeping role in phosphate transport. The polypeptide is Sodium-dependent phosphate transporter 1-B (slc20a1-b) (Xenopus laevis (African clawed frog)).